A 133-amino-acid chain; its full sequence is Protein PROTON GRADIENT REGULATION 5, chloroplastic (133 aa).

The transit peptide at 1–60 directs the protein to the chloroplast; the sequence is MAAASISAIGCNQTLIGTSFYGGWGSSISGEDYQTMLSKTVAPPQQARVSRKAIRAVPMM.

Belongs to the PGR5 family. As to quaternary structure, interacts with PGRL1A and PGRL1B. Post-translationally, disulfide bonds; Cys-11 and Cys-105 are probably involved in the formation of disulfide bridges with 'Cys-300' and 'Cys-303' of PGRL1A. 'Cys-272' and 'Cys-275' of PGRL1A may also be used to form the disulfide bridges, but in this case the cyclic electron flow is lost.

It localises to the plastid. The protein resides in the chloroplast thylakoid membrane. Its function is as follows. Critical for growth under fluctuating-light conditions. Involved in the regulation of the cyclic electron flow (CEF) around Photosystem I. Essential for the reduction of PGRL1A by ferredoxin and for photoprotection. Contributes to maximize photosynthesis efficiency after a long dark adaptation via the regulation of non-photochemical quenching (NPQ); acts independently from DLDG1. Promotes the induction of steady-state proton motive force (pmf) and energy-dependent quenching (qE). This Arabidopsis thaliana (Mouse-ear cress) protein is Protein PROTON GRADIENT REGULATION 5, chloroplastic.